A 249-amino-acid polypeptide reads, in one-letter code: tRNA pseudouridine synthase A (249 aa).

D52 acts as the Nucleophile in catalysis. Y110 lines the substrate pocket.

The protein belongs to the tRNA pseudouridine synthase TruA family. As to quaternary structure, homodimer.

The enzyme catalyses uridine(38/39/40) in tRNA = pseudouridine(38/39/40) in tRNA. In terms of biological role, formation of pseudouridine at positions 38, 39 and 40 in the anticodon stem and loop of transfer RNAs. The polypeptide is tRNA pseudouridine synthase A (Syntrophomonas wolfei subsp. wolfei (strain DSM 2245B / Goettingen)).